The primary structure comprises 243 residues: 23S rRNA (guanosine-2'-O-)-methyltransferase RlmB (243 aa).

3 residues coordinate S-adenosyl-L-methionine: G196, I216, and L225.

The protein belongs to the class IV-like SAM-binding methyltransferase superfamily. RNA methyltransferase TrmH family. RlmB subfamily. In terms of assembly, homodimer.

Its subcellular location is the cytoplasm. The enzyme catalyses guanosine(2251) in 23S rRNA + S-adenosyl-L-methionine = 2'-O-methylguanosine(2251) in 23S rRNA + S-adenosyl-L-homocysteine + H(+). Its function is as follows. Specifically methylates the ribose of guanosine 2251 in 23S rRNA. The chain is 23S rRNA (guanosine-2'-O-)-methyltransferase RlmB from Shigella flexneri.